A 473-amino-acid polypeptide reads, in one-letter code: MAVKTYQAGVKEYRQTYWMPEYTPLDTDLLACFKITPQAGVDREEAAAAVAAESSTGTWTTVWTDLLTDMDYYKGRAYRIEDVPGDDTCFYAFIAYPIDLFEEGSVVNVFTSLVGNVFGFKAIRALRLEDIRFPIAYVKTCNGPPNGIQVERDVINKYGRPLLGCTIKPKLGLSGKNYGRAVYECLRGGLDFTKDDENINSQPFMRWKQRFDFVQEATLKAEQETGERKGHYLNVTAPTPDEMFKRAEYAKEIGAPIIMHDYITGGFCANTGLAQWCRDNGMLLHIHRAMHAVLDRNPHHGIHFRVLTKILRLSGGDHLHTGTVVGKLEGDRASTLGWIDLLRESYVPEDRSRGIFFDQDWGSMPGAFAVASGGIHVWHMPALVTIFGDDSVLQFGGGTLGHPWGNAAGAAANRVALEACVQARNEGRQVEKEGREILTAAAQHSPELKIAMETWKEIKFEFDTVDKLDVTNK.

Residues Asn116 and Thr166 each coordinate substrate. Lys168 serves as the catalytic Proton acceptor. Lys170 contacts substrate. Positions 194, 196, and 197 each coordinate Mg(2+). An N6-carboxylysine modification is found at Lys194. His287 (proton acceptor) is an active-site residue. Residues Arg288, His320, and Ser372 each contribute to the substrate site.

This sequence belongs to the RuBisCO large chain family. Type I subfamily. In terms of assembly, heterohexadecamer of 8 large chains and 8 small chains. Mg(2+) is required as a cofactor.

It catalyses the reaction 2 (2R)-3-phosphoglycerate + 2 H(+) = D-ribulose 1,5-bisphosphate + CO2 + H2O. The catalysed reaction is D-ribulose 1,5-bisphosphate + O2 = 2-phosphoglycolate + (2R)-3-phosphoglycerate + 2 H(+). In terms of biological role, ruBisCO catalyzes two reactions: the carboxylation of D-ribulose 1,5-bisphosphate, the primary event in carbon dioxide fixation, as well as the oxidative fragmentation of the pentose substrate. Both reactions occur simultaneously and in competition at the same active site. This is Ribulose bisphosphate carboxylase large chain from Thiomonas intermedia (strain K12) (Thiobacillus intermedius).